The chain runs to 84 residues: Beta-defensin 119 (84 aa).

The signal sequence occupies residues 1–21 (MKFLFLFLAILLATEVPVISG). Cystine bridges form between C28–C55, C35–C49, and C39–C56.

The protein belongs to the beta-defensin family. In terms of tissue distribution, abundant expression in the male reproductive tract only. Expressed abundantly in testis, while expression in epididymis decreased gradually from caput to cauda.

The protein resides in the secreted. Has antibacterial activity. The sequence is that of Beta-defensin 119 (DEFB119) from Macaca mulatta (Rhesus macaque).